A 161-amino-acid polypeptide reads, in one-letter code: Probable endopeptidase HI_1314 (161 aa).

The N-terminal stretch at 1-18 is a signal peptide; that stretch reads MKVYKSFLIATASLFLFA. Cys-19 is lipidated: N-palmitoyl cysteine. The S-diacylglycerol cysteine moiety is linked to residue Cys-19. The 123-residue stretch at 39–161 folds into the NlpC/P60 domain; the sequence is IMAIAMLSEQ…SKAFWQVRRI (123 aa). Cys-69 functions as the Nucleophile in the catalytic mechanism. The active-site Proton acceptor is the His-122. His-134 is a catalytic residue.

The protein belongs to the peptidase C40 family.

Its subcellular location is the cell membrane. This Haemophilus influenzae (strain ATCC 51907 / DSM 11121 / KW20 / Rd) protein is Probable endopeptidase HI_1314.